Reading from the N-terminus, the 275-residue chain is Fructose-2,6-bisphosphatase TIGAR (275 aa).

The active-site Tele-phosphohistidine intermediate is the His-11. The Proton donor/acceptor role is filled by Glu-89.

It belongs to the phosphoglycerate mutase family.

It is found in the cytoplasm. It localises to the nucleus. The protein localises to the mitochondrion. It carries out the reaction beta-D-fructose 2,6-bisphosphate + H2O = beta-D-fructose 6-phosphate + phosphate. Functionally, fructose-bisphosphatase hydrolyzing fructose-2,6-bisphosphate as well as fructose-1,6-bisphosphate. Acts as a negative regulator of glycolysis by lowering intracellular levels of fructose-2,6-bisphosphate in a p53/TP53-dependent manner, resulting in the pentose phosphate pathway (PPP) activation and NADPH production. Contributes to the generation of reduced glutathione to cause a decrease in intracellular reactive oxygen species (ROS) content, correlating with its ability to protect cells from oxidative or metabolic stress-induced cell death. May play a role in mitophagy inhibition. This is Fructose-2,6-bisphosphatase TIGAR from Xenopus laevis (African clawed frog).